The following is a 286-amino-acid chain: Probable aquaporin PIP-type pTOM75 (286 aa).

Residues 1–35 (MAENKEEDVKLGANKFRETQPLGTAAQTDKDYKEP) are disordered. Topologically, residues 1 to 55 (MAENKEEDVKLGANKFRETQPLGTAAQTDKDYKEPPPAPLFEPGELSSWSFYRAG) are cytoplasmic. Residues 7 to 18 (EDVKLGANKFRE) show a composition bias toward basic and acidic residues. The helical transmembrane segment at 56-76 (IAEFMATFLFLYITILTVMGL) threads the bilayer. Residues 77 to 89 (KRSDSLCSSVGIQ) are Extracellular-facing. A helical transmembrane segment spans residues 90–110 (GVAWAFGGMIFALVYCTAGIS). Topologically, residues 111–133 (GGHINPAVTFGLFLARKLSLTRA) are cytoplasmic. Positions 115 to 117 (NPA) match the NPA 1 motif. A helical membrane pass occupies residues 134 to 154 (VFYMVMQCLGAICGAGVVKGF). At 155–175 (MVGPYQRLGGGANVVNPGYTK) the chain is on the extracellular side. Residues 176 to 196 (GDGLGAEIIGTFVLVYTVFSA) form a helical membrane-spanning segment. The Cytoplasmic portion of the chain corresponds to 197–209 (TDAKRNARDSHVP). The chain crosses the membrane as a helical span at residues 210–230 (ILAPLPIGFAVFLVHLATIPI). At 231 to 257 (TGTGINPARSLGAAIIYNDEHAWNDHW) the chain is on the extracellular side. An NPA 2 motif is present at residues 236-238 (NPA). A helical transmembrane segment spans residues 258 to 278 (IFWVGPMIGAALAAIYHQIII). Topologically, residues 279-286 (RAMPFHRS) are cytoplasmic.

The protein belongs to the MIP/aquaporin (TC 1.A.8) family. PIP (TC 1.A.8.11) subfamily. Roots, ripening fruit and senescing leaves.

Its subcellular location is the cell membrane. Functionally, aquaporins facilitate the transport of water and small neutral solutes across cell membranes. The chain is Probable aquaporin PIP-type pTOM75 from Solanum lycopersicum (Tomato).